The chain runs to 385 residues: Ribosomal RNA large subunit methyltransferase G (385 aa).

It belongs to the methyltransferase superfamily. RlmG family.

It is found in the cytoplasm. It carries out the reaction guanosine(1835) in 23S rRNA + S-adenosyl-L-methionine = N(2)-methylguanosine(1835) in 23S rRNA + S-adenosyl-L-homocysteine + H(+). Specifically methylates the guanine in position 1835 (m2G1835) of 23S rRNA. The protein is Ribosomal RNA large subunit methyltransferase G of Vibrio parahaemolyticus serotype O3:K6 (strain RIMD 2210633).